Here is a 552-residue protein sequence, read N- to C-terminus: Beta-hexosaminidase A (552 aa).

A signal peptide spans 1–15; the sequence is MRLIVLSLLFTSTLA. Residue asparagine 44 is glycosylated (N-linked (GlcNAc...) asparagine). Glutamate 322 acts as the Proton donor in catalysis. 3 N-linked (GlcNAc...) asparagine glycosylation sites follow: asparagine 348, asparagine 409, and asparagine 457.

It belongs to the glycosyl hydrolase 20 family.

It is found in the lysosome. It catalyses the reaction Hydrolysis of terminal non-reducing N-acetyl-D-hexosamine residues in N-acetyl-beta-D-hexosaminides.. Functionally, responsible for the degradation of GM2 gangliosides, and a variety of other molecules containing terminal N-acetyl hexosamines. Degrades chitotriose. The polypeptide is Beta-hexosaminidase A (Caenorhabditis briggsae).